A 182-amino-acid chain; its full sequence is Large ribosomal subunit protein uL6 (182 aa).

The protein belongs to the universal ribosomal protein uL6 family. In terms of assembly, part of the 50S ribosomal subunit.

In terms of biological role, this protein binds to the 23S rRNA, and is important in its secondary structure. It is located near the subunit interface in the base of the L7/L12 stalk, and near the tRNA binding site of the peptidyltransferase center. The chain is Large ribosomal subunit protein uL6 from Methanococcus maripaludis (strain C6 / ATCC BAA-1332).